Here is a 2223-residue protein sequence, read N- to C-terminus: Sperm-associated antigen 17 (2223 aa).

Basic and acidic residues-rich tracts occupy residues 144 to 172 and 200 to 212; these read RENE…EKKA and RRGE…RYID. A disordered region spans residues 144–214; it reads RENEKKVIED…DHTNRYIDDE (71 aa). The stretch at 266-295 forms a coiled coil; it reads NQQQEVLLQSEDLEAEKLKKENAIKELKTF. Disordered stretches follow at residues 387–416, 680–710, 731–762, 950–1015, 1179–1212, and 1345–1378; these read MPTS…PPPV, MSVQ…LNNL, PQHE…PKKM, EERL…EPKI, GKIK…PEPV, and ETIP…PPPE. Basic and acidic residues-rich tracts occupy residues 743-756, 950-999, and 1182-1205; these read EIKD…DSHE, EERL…EQVK, and KGKE…KKEE. The stretch at 940 to 966 forms a coiled coil; that stretch reads WKEEQHRLAEEERLREEKKAEKKGKEA. Positions 1345-1354 are enriched in polar residues; sequence ETIPSEITNT. Residues 1874–1907 are a coiled coil; it reads RHTASSKRWKEKIDKTRKEIETTQNYLMDIKNRI. Disordered stretches follow at residues 1938-1957 and 1962-2008; these read TKKN…DLNL and HKVS…SYEP. Residues 1988–1998 show a composition bias toward polar residues; it reads TAQNQTENLTK.

Interacts (via the C-terminus) with SPAG6; the interaction probably occurs on polymerized microtubules. Highly expressed in testis. Expressed in organs that contain cilia-bearing cells including brain, oviduct, lung, and uterus.

Its subcellular location is the cytoplasm. It is found in the cytoskeleton. The protein localises to the flagellum axoneme. The protein resides in the cytoplasmic vesicle. It localises to the secretory vesicle. Its subcellular location is the acrosome. It is found in the golgi apparatus. Functionally, component of the central pair apparatus of ciliary axonemes. Plays a critical role in the function and structure of motile cilia. May play a role in endochondral bone formation, most likely because of a function in primary cilia of chondrocytes and osteoblasts. Essential for normal spermatogenesis and male fertility. Required for normal manchette structure, transport of proteins along the manchette microtubules and formation of the sperm head and flagellum. Essential for sperm flagellum development and proper assembly of the respiratory motile cilia central pair apparatus, but not the brain ependymal cilia. The chain is Sperm-associated antigen 17 (SPAG17) from Homo sapiens (Human).